The primary structure comprises 406 residues: Succinylornithine transaminase (406 aa).

Lysine 252 is modified (N6-(pyridoxal phosphate)lysine).

Belongs to the class-III pyridoxal-phosphate-dependent aminotransferase family. AstC subfamily. The cofactor is pyridoxal 5'-phosphate.

It carries out the reaction N(2)-succinyl-L-ornithine + 2-oxoglutarate = N-succinyl-L-glutamate 5-semialdehyde + L-glutamate. The protein operates within amino-acid degradation; L-arginine degradation via AST pathway; L-glutamate and succinate from L-arginine: step 3/5. Its function is as follows. Catalyzes the transamination of N(2)-succinylornithine and alpha-ketoglutarate into N(2)-succinylglutamate semialdehyde and glutamate. Can also act as an acetylornithine aminotransferase. This is Succinylornithine transaminase from Escherichia coli O45:K1 (strain S88 / ExPEC).